We begin with the raw amino-acid sequence, 501 residues long: Phosphatidylinositol 4-kinase type 2-beta (501 aa).

2 disordered regions span residues 1–30 (MMAE…SSEV) and 65–122 (TELE…NHFP). The span at 17–27 (GDSTPETNFLS) shows a compositional bias: polar residues. Residues 76 to 88 (ALLLPGPAGSLSP) are compositionally biased toward low complexity. Polar residues predominate over residues 99–117 (NMLSSSSDNLASPGNSSGE). A PI3K/PI4K catalytic domain is found at 141-471 (GVFPERISQG…VQMPRVVVER (331 aa)). The segment at 147–153 (ISQGSSG) is G-loop. The ATP site is built by Ser-154 and Lys-169. The interval 174-176 (EPY) is important for substrate binding. The interval 182–195 (KWTKYFHKVCCPCC) is important for interaction with membranes. Residues 278-281 (QLFV) and 292-293 (RK) contribute to the ATP site. The important for interaction with membranes stretch occupies residues 285–293 (HEADFWLRK). The interval 322 to 330 (RNTDRGNDN) is catalytic loop. Residues 362 to 382 (AIDNGLAFPFKHPDEWRAYPF) form an activation loop region. Asp-364 provides a ligand contact to ATP. The important for interaction with membranes stretch occupies residues 377 to 386 (WRAYPFHWAW).

This sequence belongs to the PI3/PI4-kinase family. Type II PI4K subfamily.

Its subcellular location is the cytoplasm. The protein resides in the cytosol. The protein localises to the golgi apparatus membrane. It localises to the endoplasmic reticulum membrane. It is found in the cell membrane. Its subcellular location is the early endosome membrane. It catalyses the reaction a 1,2-diacyl-sn-glycero-3-phospho-(1D-myo-inositol) + ATP = a 1,2-diacyl-sn-glycero-3-phospho-(1D-myo-inositol 4-phosphate) + ADP + H(+). Its function is as follows. Contributes to the overall PI4-kinase activity of the cell. This contribution may be especially significant in plasma membrane, endosomal and Golgi compartments. The phosphorylation of phosphatidylinositol (PI) to PI4P is the first committed step in the generation of phosphatidylinositol 4,5-bisphosphate (PIP2), a precursor of the second messenger inositol 1,4,5-trisphosphate (InsP3). The protein is Phosphatidylinositol 4-kinase type 2-beta (pi4k2b) of Danio rerio (Zebrafish).